Consider the following 697-residue polypeptide: Long-chain-fatty-acid--CoA ligase 6 (697 aa).

Residues 25–45 (LSATTLVSMGALAAILAYWLT) traverse the membrane as a helical; Signal-anchor for type III membrane protein segment. Over 46–697 (HRPKALQPPC…QIEELYSISM (652 aa)) the chain is Cytoplasmic.

The protein belongs to the ATP-dependent AMP-binding enzyme family. Requires Mg(2+) as cofactor. In terms of tissue distribution, expressed predominantly in brain and, to a much lesser extent, in heart and adrenal.

The protein localises to the mitochondrion outer membrane. The protein resides in the peroxisome membrane. Its subcellular location is the microsome membrane. It is found in the endoplasmic reticulum membrane. The catalysed reaction is a long-chain fatty acid + ATP + CoA = a long-chain fatty acyl-CoA + AMP + diphosphate. It carries out the reaction (5Z,8Z,11Z,14Z)-eicosatetraenoate + ATP + CoA = (5Z,8Z,11Z,14Z)-eicosatetraenoyl-CoA + AMP + diphosphate. The enzyme catalyses 15-hydroxy-(5Z,8Z,11Z,13E)-eicosatetraenoate + ATP + CoA = 15-hydroxy-(5Z,8Z,11Z,13E)-eicosatetraenoyl-CoA + AMP + diphosphate. It catalyses the reaction 12-hydroxy-(5Z,8Z,10E,14Z)-eicosatetraenoate + ATP + CoA = 12-hydroxy-(5Z,8Z,10E,14Z)-eicosatetraenoyl-CoA + AMP + diphosphate. The catalysed reaction is 5-hydroxy-(6E,8Z,11Z,14Z)-eicosatetraenoate + ATP + CoA = 5-hydroxy-(6E,8Z,11Z,14Z)-eicosatetraenoyl-CoA + AMP + diphosphate. It carries out the reaction hexadecanoate + ATP + CoA = hexadecanoyl-CoA + AMP + diphosphate. The enzyme catalyses (E)-hexadec-2-enoate + ATP + CoA = (2E)-hexadecenoyl-CoA + AMP + diphosphate. Catalyzes the conversion of long-chain fatty acids to their active form acyl-CoA for both synthesis of cellular lipids, and degradation via beta-oxidation. Plays an important role in fatty acid metabolism in brain and the acyl-CoAs produced may be utilized exclusively for the synthesis of the brain lipid. This is Long-chain-fatty-acid--CoA ligase 6 from Rattus norvegicus (Rat).